The sequence spans 1023 residues: Sodium/potassium-transporting ATPase subunit alpha-1 (1023 aa).

The propeptide occupies 1 to 5 (MGKGV). Residues 1 to 11 (MGKGVGRDKYE) are compositionally biased toward basic and acidic residues. Residues 1–38 (MGKGVGRDKYEPAAVSEHGDKKSKKAKKERDMDELKKE) form a disordered region. Residues 6–87 (GRDKYEPAAV…NALTPPPTTP (82 aa)) are Cytoplasmic-facing. Position 9 is an N6-acetyllysine (Lys-9). At Tyr-10 the chain carries Phosphotyrosine. Residue Ser-16 is modified to Phosphoserine; by PKC. Residue Lys-21 is modified to N6-acetyllysine. A Phosphoserine; by PKC modification is found at Ser-23. Basic and acidic residues predominate over residues 28-38 (KERDMDELKKE). 2 positions are modified to phosphoserine: Ser-40 and Ser-47. The phosphoinositide-3 kinase binding stretch occupies residues 82–84 (PPP). Residues 88-108 (EWVKFCRQLFGGFSMLLWIGA) traverse the membrane as a helical segment. Topologically, residues 109 to 131 (ILCFLAYGIRSATEEEPPNDDLY) are extracellular. Residues 132–152 (LGVVLSAVVIITGCFSYYQEA) traverse the membrane as a helical segment. The Cytoplasmic portion of the chain corresponds to 153–288 (KSSKIMESFK…GGQTPIAEEI (136 aa)). Positions 216 to 235 (SSLTGESEPQTRSPDFTNEN) are disordered. The residue at position 228 (Ser-228) is a Phosphoserine. Tyr-260 is modified (phosphotyrosine). The chain crosses the membrane as a helical span at residues 289–308 (EHFIHLITGVAVFLGVSFFI). The Extracellular segment spans residues 309–320 (LSLILEYTWLEA). The helical transmembrane segment at 321-338 (VIFLIGIIVANVPEGLLA) threads the bilayer. Residues 339 to 772 (TVTVCLTLTA…EEGRLIFDNL (434 aa)) lie on the Cytoplasmic side of the membrane. Asp-376 functions as the 4-aspartylphosphate intermediate in the catalytic mechanism. Ser-452 and Ser-484 each carry phosphoserine. Lys-487 serves as a coordination point for ATP. At Tyr-542 the chain carries Phosphotyrosine. The mediates interaction with SCN7A stretch occupies residues 596 to 717 (RAAVPDAVGK…QGAIVAVTGD (122 aa)). N6-succinyllysine is present on Lys-661. Residues Ser-668 and Ser-675 each carry the phosphoserine modification. The Mg(2+) site is built by Asp-717 and Asp-721. A helical transmembrane segment spans residues 773–792 (KKSIAYTLTSNIPEITPFLI). Residues 793 to 802 (FIIANIPLPL) lie on the Extracellular side of the membrane. A helical membrane pass occupies residues 803-823 (GTVTILCIDLGTDMVPAISLA). At 824 to 843 (YEQAESDIMKRQPRNPKTDK) the chain is on the cytoplasmic side. A helical membrane pass occupies residues 844-866 (LVNERLISMAYGQIGMIQALGGF). Residues 867–918 (FTYFVILAENGFLPFHLLGIRETWDDRWINDVEDSYGQQWTYEQRKIVEFTC) are Extracellular-facing. The chain crosses the membrane as a helical span at residues 919-938 (HTAFFVSIVVVQWADLVICK). The Cytoplasmic segment spans residues 939–951 (TRRNSVFQQGMKN). At Ser-943 the chain carries Phosphoserine; by PKA. A helical membrane pass occupies residues 952–970 (KILIFGLFEETALAAFLSY). Topologically, residues 971–985 (CPGMGAALRMYPLKP) are extracellular. Residues 986-1006 (TWWFCAFPYSLLIFVYDEVRK) traverse the membrane as a helical segment. At 1007–1023 (LIIRRRPGGWVEKETYY) the chain is on the cytoplasmic side.

Belongs to the cation transport ATPase (P-type) (TC 3.A.3) family. Type IIC subfamily. As to quaternary structure, the sodium/potassium-transporting ATPase is composed of a catalytic alpha subunit, an auxiliary non-catalytic beta subunit and an additional regulatory subunit. Interacts with regulatory subunit FXYD1. Interacts with regulatory subunit FXYD3. Interacts with SLC35G1 and STIM1. Interacts with SIK1. Interacts with CLN3; this interaction regulates the sodium/potassium-transporting ATPase complex localization at the plasma membrane. Interacts with SCN7A; activates ATP1A1 P-type sodium:potassium-exchanging transporter activity which indirectly signals to nearby neurons to regulate sodium homeostasis. In terms of processing, phosphorylation on Tyr-10 modulates pumping activity. Phosphorylation of Ser-943 by PKA modulates the response of ATP1A1 to PKC. Dephosphorylation by protein phosphatase 2A (PP2A) following increases in intracellular sodium, leading to increase catalytic activity. Expressed in the central nervous system, in most motor and sensory axons of the ventral and dorsal roots, as well as in the large motor neurons of the ventral horn (at protein level).

Its subcellular location is the cell membrane. The protein localises to the basolateral cell membrane. It is found in the sarcolemma. It localises to the cell projection. The protein resides in the axon. Its subcellular location is the melanosome. It catalyses the reaction K(+)(out) + Na(+)(in) + ATP + H2O = K(+)(in) + Na(+)(out) + ADP + phosphate + H(+). In terms of biological role, this is the catalytic component of the active enzyme, which catalyzes the hydrolysis of ATP coupled with the exchange of sodium and potassium ions across the plasma membrane. This action creates the electrochemical gradient of sodium and potassium ions, providing the energy for active transport of various nutrients. Could also be part of an osmosensory signaling pathway that senses body-fluid sodium levels and controls salt intake behavior as well as voluntary water intake to regulate sodium homeostasis. The protein is Sodium/potassium-transporting ATPase subunit alpha-1 (Atp1a1) of Rattus norvegicus (Rat).